The primary structure comprises 121 residues: Nitrogen fixation nifHD region glnB-like protein 2 (121 aa).

The protein belongs to the P(II) protein family.

Its function is as follows. Could be involved in the regulation of nitrogen fixation. This Methanococcus maripaludis (Methanococcus deltae) protein is Nitrogen fixation nifHD region glnB-like protein 2 (glnBII).